We begin with the raw amino-acid sequence, 322 residues long: Tlg2p-like protein a (322 aa).

The Cytoplasmic segment spans residues 1 to 301 (MATRNRTLLF…QRHGGMVKCA (301 aa)). The stretch at 116–146 (KEDQHNIESLTQEITFLLKKSEKQLQRLSAS) forms a coiled coil. The region spanning 226–288 (EEVSVEREKE…EDGLKQLQKA (63 aa)) is the t-SNARE coiled-coil homology domain. A helical; Anchor for type IV membrane protein membrane pass occupies residues 302-322 (SVLVILCFIMLLLLILKEIFL).

This sequence belongs to the syntaxin family. In terms of assembly, interacts with VTI12 and SYP61 to form a t-SNARE complex and with VPS45. Interacts with TNO1. Binds to YKT61 and YKT62. Core constituent of the SNARE complex required for membrane fusion at the trans-Golgi network. In terms of tissue distribution, mostly expressed in flowers, to a lower extent in leaves and roots, and, at low levels, in stems.

It is found in the golgi apparatus. The protein resides in the trans-Golgi network membrane. In terms of biological role, contributes to the regulation of secretory and vacuolar transport pathways in the post-Golgi network, and to the maintenance of the Golgi apparatus and trans-Golgi network (TGN) morphologies. Together with VTI12, required for membrane fusion. Vesicle trafficking protein that functions in the secretory pathway and mediates liposome fusion; the fusion of phospholipid vesicles containing SYP41 and VTI12 is triggered by YKT61 and YKT62. Required for extracellular resistance responses to a fungal pathogen. Also involved in the protection of chloroplasts from salicylic acid-dependent biotic stress. This chain is Tlg2p-like protein a, found in Arabidopsis thaliana (Mouse-ear cress).